We begin with the raw amino-acid sequence, 344 residues long: F17a-G fimbrial adhesin (344 aa).

An N-terminal signal peptide occupies residues 1-22 (MTNFYKVFLAVFILVCCNISQA). A receptor-binding lectin domain region spans residues 23–199 (AVSFIGSTEN…SLNPFTLNDT (177 aa)). A carbohydrate contacts are provided by residues 65–66 (AN), 110–111 (DT), and 139–142 (STQG). Cys-75 and Cys-132 are joined by a disulfide. The fimbrillin-binding domain stretch occupies residues 200–344 (VTSCRLLTPS…GISTFTFSYQ (145 aa)). Positions 288 to 308 (LKFGPDSPVKGNENQWQLSTG) are disordered. Positions 299 to 308 (NENQWQLSTG) are enriched in polar residues.

The protein belongs to the fimbrial protein family.

It is found in the fimbrium. In terms of biological role, essential fimbrial adhesion factor that mediates binding to N-acetylglucosamine-containing receptors in the host intestinal microvilli, leading to colonization of the intestinal tissue, and diarrhea or septicemia. Also confers adhesiveness to laminin and basement membranes. This chain is F17a-G fimbrial adhesin (f17aG), found in Escherichia coli.